Here is a 219-residue protein sequence, read N- to C-terminus: Cytidylate kinase (219 aa).

15–23 (GPAASGKGT) is a binding site for ATP.

This sequence belongs to the cytidylate kinase family. Type 1 subfamily.

The protein resides in the cytoplasm. It carries out the reaction CMP + ATP = CDP + ADP. The enzyme catalyses dCMP + ATP = dCDP + ADP. The protein is Cytidylate kinase of Brucella suis biovar 1 (strain 1330).